Reading from the N-terminus, the 78-residue chain is Acyl carrier protein (78 aa).

Residues 2-77 (DELFLRMRAL…DAYEFIKSKV (76 aa)) form the Carrier domain. Ser37 bears the O-(pantetheine 4'-phosphoryl)serine mark.

The protein belongs to the acyl carrier protein (ACP) family. 4'-phosphopantetheine is transferred from CoA to a specific serine of apo-ACP by AcpS. This modification is essential for activity because fatty acids are bound in thioester linkage to the sulfhydryl of the prosthetic group.

The protein resides in the cytoplasm. The protein operates within lipid metabolism; fatty acid biosynthesis. Carrier of the growing fatty acid chain in fatty acid biosynthesis. This is Acyl carrier protein from Treponema pallidum (strain Nichols).